The following is a 179-amino-acid chain: Signal peptidase complex catalytic subunit SEC11A (179 aa).

The Cytoplasmic segment spans residues 1-16; the sequence is MLSLDFLDDVRRMNKR. The helical; Signal-anchor for type II membrane protein transmembrane segment at 17-36 threads the bilayer; that stretch reads QLYYQVLNFGMIVSSALMIW. Topologically, residues 37-179 are lumenal; sequence KGLMLITGSE…LGLFVLVHRE (143 aa). Catalysis depends on charge relay system residues S56, H96, and D122. The interval 165-176 is C-terminal short (CTS) helix; it reads AVLFLLGLFVLV.

This sequence belongs to the peptidase S26B family. As to quaternary structure, component of the signal peptidase complex paralog A (SPC-A) composed of a catalytic subunit SEC11A and three accessory subunits SPCS1, SPCS2 and SPCS3. Within the complex, interacts with SPCS2 and SPCS3. The complex induces a local thinning of the ER membrane which is used to measure the length of the signal peptide (SP) h-region of protein substrates. This ensures the selectivity of the complex towards h-regions shorter than 18-20 amino acids.

Its subcellular location is the endoplasmic reticulum membrane. The catalysed reaction is Cleavage of hydrophobic, N-terminal signal or leader sequences from secreted and periplasmic proteins.. Functionally, catalytic component of the signal peptidase complex (SPC) which catalyzes the cleavage of N-terminal signal sequences from nascent proteins as they are translocated into the lumen of the endoplasmic reticulum. Specifically cleaves N-terminal signal peptides that contain a hydrophobic alpha-helix (h-region) shorter than 18-20 amino acids. The chain is Signal peptidase complex catalytic subunit SEC11A (Sec11a) from Rattus norvegicus (Rat).